Here is a 347-residue protein sequence, read N- to C-terminus: MAIDEDKQKAISLAIKQIDKVFGKGALVRLGDKQVEKIDSISTGSLGLDLALGIGGVPKGRIIEIYGPESSGKTTLSLHIIAECQKNGGVCAFIDAEHALDVHYAKRLGVDTENLLVSQPDTGEQALEILETITRSGGIDLVVVDSVAALTPKAEIDGDMGDQHVGLQARLMSHALRKITGVLHKMNTTLIFINQIRMKIGMMGYGSPETTTGGNALKFYASVRIDIRRIASLKQNEQHIGNRAKAKVVKNKVAPPFREAEFDIMFGEGISKEGEIIDYGVKLDIVDKSGAWLSYQDKKLGQGRENAKALLKEDKALADEITLKIKESIGSNEEIMPLPDEPLEEME.

67–74 is an ATP binding site; that stretch reads GPESSGKT.

The protein belongs to the RecA family. The protein migrates as a 40 kDa protein in strains 69A and NCTC 11637. When overexpressed in E.coli a 38 kDa protein is made which is unable to complement the E.coli deletion mutant. It has been suggested this size difference is due to a post-translational modification.

It is found in the cytoplasm. Can catalyze the hydrolysis of ATP in the presence of single-stranded DNA, the ATP-dependent uptake of single-stranded DNA by duplex DNA, and the ATP-dependent hybridization of homologous single-stranded DNAs. It interacts with LexA causing its activation and leading to its autocatalytic cleavage. Its function is as follows. Deletion of this gene leads to the inability of the bacteria to perform homologous recombination, and markedly increases UV sensitivity. This chain is Protein RecA, found in Helicobacter pylori (strain ATCC 700392 / 26695) (Campylobacter pylori).